We begin with the raw amino-acid sequence, 37 residues long: Large ribosomal subunit protein bL36c (37 aa).

The protein belongs to the bacterial ribosomal protein bL36 family.

The protein localises to the plastid. It is found in the chloroplast. The polypeptide is Large ribosomal subunit protein bL36c (Welwitschia mirabilis (Tree tumbo)).